Here is a 110-residue protein sequence, read N- to C-terminus: Protein YcgL (110 aa).

The YcgL domain occupies 14-98 (MFCVIYRSSK…PPEDLLKQHL (85 aa)). The tract at residues 88–110 (PPPEDLLKQHLSSVGQNTSHADR) is disordered. Residues 97-110 (HLSSVGQNTSHADR) are compositionally biased toward polar residues.

The chain is Protein YcgL from Salmonella schwarzengrund (strain CVM19633).